Here is a 529-residue protein sequence, read N- to C-terminus: Ectonucleoside triphosphate diphosphohydrolase 3 (529 aa).

The Cytoplasmic portion of the chain corresponds to 1-22 (MFTVLTRQPCEQAGLKALYRTP). A helical transmembrane segment spans residues 23-43 (TIIALVVLLVSIVVLVSITVI). At 44–485 (QIHKQEVLPP…PLIRLPIEPP (442 aa)) the chain is on the extracellular side. A glycan (N-linked (GlcNAc...) asparagine) is linked at Asn81. Cysteines 92 and 116 form a disulfide. N-linked (GlcNAc...) asparagine glycosylation is present at Asn149. The active-site Proton acceptor is the Glu182. 222-226 (GASTQ) is a binding site for ATP. Asn238 carries an N-linked (GlcNAc...) asparagine glycan. 3 cysteine pairs are disulfide-bonded: Cys261/Cys308, Cys289/Cys334, and Cys347/Cys353. 4 N-linked (GlcNAc...) asparagine glycosylation sites follow: Asn381, Asn392, Asn402, and Asn454. Cys399 and Cys422 are joined by a disulfide. The helical transmembrane segment at 486 to 506 (VFVGTLAFFTAAALLCLAFLA) threads the bilayer. Over 507 to 529 (YLCSATRRKRHSEHAFDHAVDSD) the chain is Cytoplasmic.

The protein belongs to the GDA1/CD39 NTPase family. Ca(2+) is required as a cofactor. It depends on Mg(2+) as a cofactor. Expressed in adult brain, pancreas, spleen and prostate. Moderate or low expression is seen in most tissues. Not expressed in liver and peripheral blood leukocytes.

The protein resides in the cell membrane. It catalyses the reaction a ribonucleoside 5'-triphosphate + 2 H2O = a ribonucleoside 5'-phosphate + 2 phosphate + 2 H(+). Has a threefold preference for the hydrolysis of ATP over ADP. This chain is Ectonucleoside triphosphate diphosphohydrolase 3 (ENTPD3), found in Homo sapiens (Human).